Consider the following 132-residue polypeptide: MRHGNGLRKLNRTSSHRLAMLRNMCNSLIQHEAIKTTVPKAKELRRVVERLLTLGKTPTLANKRLAFDRLRDRDNVVKLFGVLGPRYAARPGGYTRILKMGFRVGDNAPMAFVELVDRPDPSAAVEVTEDKA.

The protein belongs to the bacterial ribosomal protein bL17 family. In terms of assembly, part of the 50S ribosomal subunit. Contacts protein L32.

This Leptothrix cholodnii (strain ATCC 51168 / LMG 8142 / SP-6) (Leptothrix discophora (strain SP-6)) protein is Large ribosomal subunit protein bL17.